We begin with the raw amino-acid sequence, 358 residues long: 3-dehydroquinate synthase (358 aa).

Residues 70–75 (DGEQFK), 104–108 (GVIGD), 128–129 (TT), K141, K150, and 168–171 (CLHT) contribute to the NAD(+) site. The Zn(2+) site is built by E183, H246, and H263.

This sequence belongs to the sugar phosphate cyclases superfamily. Dehydroquinate synthase family. It depends on Co(2+) as a cofactor. The cofactor is Zn(2+). Requires NAD(+) as cofactor.

Its subcellular location is the cytoplasm. It carries out the reaction 7-phospho-2-dehydro-3-deoxy-D-arabino-heptonate = 3-dehydroquinate + phosphate. Its pathway is metabolic intermediate biosynthesis; chorismate biosynthesis; chorismate from D-erythrose 4-phosphate and phosphoenolpyruvate: step 2/7. Its function is as follows. Catalyzes the conversion of 3-deoxy-D-arabino-heptulosonate 7-phosphate (DAHP) to dehydroquinate (DHQ). The chain is 3-dehydroquinate synthase from Shewanella baltica (strain OS155 / ATCC BAA-1091).